Consider the following 187-residue polypeptide: Large ribosomal subunit protein uL6 (187 aa).

The protein belongs to the universal ribosomal protein uL6 family. Part of the 50S ribosomal subunit.

Its function is as follows. This protein binds to the 23S rRNA, and is important in its secondary structure. It is located near the subunit interface in the base of the L7/L12 stalk, and near the tRNA binding site of the peptidyltransferase center. The polypeptide is Large ribosomal subunit protein uL6 (Roseiflexus sp. (strain RS-1)).